Here is a 314-residue protein sequence, read N- to C-terminus: 3'-5' exoribonuclease YhaM (314 aa).

Residues 163–279 (HVVSMLDLAK…LHYIDNLDAK (117 aa)) form the HD domain.

This sequence belongs to the YhaM family.

Its function is as follows. Shows a 3'-5' exoribonuclease activity. In Bacillus anthracis (strain CDC 684 / NRRL 3495), this protein is 3'-5' exoribonuclease YhaM.